A 117-amino-acid polypeptide reads, in one-letter code: Large ribosomal subunit protein bL20 (117 aa).

The protein belongs to the bacterial ribosomal protein bL20 family.

Its function is as follows. Binds directly to 23S ribosomal RNA and is necessary for the in vitro assembly process of the 50S ribosomal subunit. It is not involved in the protein synthesizing functions of that subunit. This chain is Large ribosomal subunit protein bL20, found in Mannheimia succiniciproducens (strain KCTC 0769BP / MBEL55E).